Here is a 417-residue protein sequence, read N- to C-terminus: Serine hydroxymethyltransferase (417 aa).

Residues L121 and 125–127 (GHL) contribute to the (6S)-5,6,7,8-tetrahydrofolate site. K229 is subject to N6-(pyridoxal phosphate)lysine. Position 355–357 (355–357 (SPF)) interacts with (6S)-5,6,7,8-tetrahydrofolate.

The protein belongs to the SHMT family. As to quaternary structure, homodimer. Pyridoxal 5'-phosphate serves as cofactor.

It is found in the cytoplasm. It catalyses the reaction (6R)-5,10-methylene-5,6,7,8-tetrahydrofolate + glycine + H2O = (6S)-5,6,7,8-tetrahydrofolate + L-serine. It functions in the pathway one-carbon metabolism; tetrahydrofolate interconversion. It participates in amino-acid biosynthesis; glycine biosynthesis; glycine from L-serine: step 1/1. Catalyzes the reversible interconversion of serine and glycine with tetrahydrofolate (THF) serving as the one-carbon carrier. This reaction serves as the major source of one-carbon groups required for the biosynthesis of purines, thymidylate, methionine, and other important biomolecules. Also exhibits THF-independent aldolase activity toward beta-hydroxyamino acids, producing glycine and aldehydes, via a retro-aldol mechanism. This is Serine hydroxymethyltransferase from Aeromonas salmonicida (strain A449).